Here is a 363-residue protein sequence, read N- to C-terminus: DNA replication and repair protein RecF (363 aa).

30–37 contributes to the ATP binding site; that stretch reads GPNGSGKT.

This sequence belongs to the RecF family.

The protein localises to the cytoplasm. Functionally, the RecF protein is involved in DNA metabolism; it is required for DNA replication and normal SOS inducibility. RecF binds preferentially to single-stranded, linear DNA. It also seems to bind ATP. This is DNA replication and repair protein RecF from Vibrio cholerae serotype O1 (strain ATCC 39541 / Classical Ogawa 395 / O395).